A 473-amino-acid polypeptide reads, in one-letter code: Aspartyl/glutamyl-tRNA(Asn/Gln) amidotransferase subunit B (473 aa).

This sequence belongs to the GatB/GatE family. GatB subfamily. Heterotrimer of A, B and C subunits.

The enzyme catalyses L-glutamyl-tRNA(Gln) + L-glutamine + ATP + H2O = L-glutaminyl-tRNA(Gln) + L-glutamate + ADP + phosphate + H(+). It carries out the reaction L-aspartyl-tRNA(Asn) + L-glutamine + ATP + H2O = L-asparaginyl-tRNA(Asn) + L-glutamate + ADP + phosphate + 2 H(+). Allows the formation of correctly charged Asn-tRNA(Asn) or Gln-tRNA(Gln) through the transamidation of misacylated Asp-tRNA(Asn) or Glu-tRNA(Gln) in organisms which lack either or both of asparaginyl-tRNA or glutaminyl-tRNA synthetases. The reaction takes place in the presence of glutamine and ATP through an activated phospho-Asp-tRNA(Asn) or phospho-Glu-tRNA(Gln). This chain is Aspartyl/glutamyl-tRNA(Asn/Gln) amidotransferase subunit B, found in Levilactobacillus brevis (strain ATCC 367 / BCRC 12310 / CIP 105137 / JCM 1170 / LMG 11437 / NCIMB 947 / NCTC 947) (Lactobacillus brevis).